The following is a 170-amino-acid chain: Bifunctional protein PyrR (170 aa).

The short motif at 90 to 102 is the PRPP-binding element; that stretch reads LVLVDDVLMSGRT.

Belongs to the purine/pyrimidine phosphoribosyltransferase family. PyrR subfamily.

The enzyme catalyses UMP + diphosphate = 5-phospho-alpha-D-ribose 1-diphosphate + uracil. In terms of biological role, regulates the transcription of the pyrimidine nucleotide (pyr) operon in response to exogenous pyrimidines. Functionally, also displays a weak uracil phosphoribosyltransferase activity which is not physiologically significant. The polypeptide is Bifunctional protein PyrR (Pseudomonas paraeruginosa (strain DSM 24068 / PA7) (Pseudomonas aeruginosa (strain PA7))).